Reading from the N-terminus, the 198-residue chain is Imidazole glycerol phosphate synthase subunit HisH (198 aa).

The 197-residue stretch at 2 to 198 folds into the Glutamine amidotransferase type-1 domain; that stretch reads KALLIDYGSG…ALARRYFEVL (197 aa). The active-site Nucleophile is Cys-80. Active-site residues include His-176 and Glu-178.

Heterodimer of HisH and HisF.

The protein resides in the cytoplasm. The catalysed reaction is 5-[(5-phospho-1-deoxy-D-ribulos-1-ylimino)methylamino]-1-(5-phospho-beta-D-ribosyl)imidazole-4-carboxamide + L-glutamine = D-erythro-1-(imidazol-4-yl)glycerol 3-phosphate + 5-amino-1-(5-phospho-beta-D-ribosyl)imidazole-4-carboxamide + L-glutamate + H(+). It carries out the reaction L-glutamine + H2O = L-glutamate + NH4(+). It participates in amino-acid biosynthesis; L-histidine biosynthesis; L-histidine from 5-phospho-alpha-D-ribose 1-diphosphate: step 5/9. IGPS catalyzes the conversion of PRFAR and glutamine to IGP, AICAR and glutamate. The HisH subunit catalyzes the hydrolysis of glutamine to glutamate and ammonia as part of the synthesis of IGP and AICAR. The resulting ammonia molecule is channeled to the active site of HisF. The protein is Imidazole glycerol phosphate synthase subunit HisH of Thermus thermophilus (strain ATCC BAA-163 / DSM 7039 / HB27).